We begin with the raw amino-acid sequence, 363 residues long: Ribosome-binding ATPase YchF (363 aa).

The region spanning Phe3–Met256 is the OBG-type G domain. Residue Asn12 to Thr17 coordinates ATP. 2 residues coordinate Mg(2+): Ser16 and Thr36. In terms of domain architecture, TGS spans Asn278–Phe361.

This sequence belongs to the TRAFAC class OBG-HflX-like GTPase superfamily. OBG GTPase family. YchF/OLA1 subfamily. The cofactor is Mg(2+).

ATPase that binds to both the 70S ribosome and the 50S ribosomal subunit in a nucleotide-independent manner. In Escherichia coli O157:H7, this protein is Ribosome-binding ATPase YchF.